Here is an 829-residue protein sequence, read N- to C-terminus: pre-rRNA 2'-O-ribose RNA methyltransferase FTSJ3 (829 aa).

S-adenosyl-L-methionine is bound by residues G56, W58, D76, D92, and D117. K157 acts as the Proton acceptor in catalysis. Positions 332-367 (ISLSSEEEGDEEESAAETKQASEEEEEREEEEQLNR) are disordered. 5 positions are modified to phosphoserine: S333, S335, S336, S345, and S353. Residues 336–346 (SEEEGDEEESA) show a composition bias toward acidic residues. Over residues 354–363 (EEEEEREEEE) the composition is skewed to acidic residues. The residue at position 389 (R389) is a Citrulline. Disordered regions lie at residues 443–508 (FLSD…PLLV) and 528–634 (DGFS…GFEV). Residues 456–473 (DAEDDDDTSLESDLDPEE) show a composition bias toward acidic residues. S531 and S544 each carry phosphoserine. A Glycyl lysine isopeptide (Lys-Gly) (interchain with G-Cter in SUMO2) cross-link involves residue K570. S575 is modified (phosphoserine). Glycyl lysine isopeptide (Lys-Gly) (interchain with G-Cter in SUMO2) cross-links involve residues K626 and K642. S659 is modified (phosphoserine). K661 is covalently cross-linked (Glycyl lysine isopeptide (Lys-Gly) (interchain with G-Cter in SUMO2)). The residue at position 671 (S671) is a Phosphoserine. Residue K693 forms a Glycyl lysine isopeptide (Lys-Gly) (interchain with G-Cter in SUMO2) linkage. Positions 722-760 (IKKVAEAKARKKRRMLKKLEQTKKKAEAVVNTVDISERE) form a coiled coil. Residue R766 is modified to Citrulline. Basic residues predominate over residues 794-804 (VRRPAGVRGHF). A disordered region spans residues 794–829 (VRRPAGVRGHFKVVDSRMKKDQRAQRKEQKRNHRRK). Residues 805–820 (KVVDSRMKKDQRAQRK) are compositionally biased toward basic and acidic residues.

The protein belongs to the class I-like SAM-binding methyltransferase superfamily. RNA methyltransferase RlmE family. SPB1 subfamily. As to quaternary structure, interacts with NIP7. Post-translationally, citrullinated by PADI4.

It is found in the nucleus. Its subcellular location is the nucleolus. It catalyses the reaction a ribonucleotide in rRNA + S-adenosyl-L-methionine = a 2'-O-methylribonucleotide in rRNA + S-adenosyl-L-homocysteine + H(+). In terms of biological role, RNA 2'-O-methyltransferase involved in the processing of the 34S pre-rRNA to 18S rRNA and in 40S ribosomal subunit formation. This is pre-rRNA 2'-O-ribose RNA methyltransferase FTSJ3 (Ftsj3) from Rattus norvegicus (Rat).